Consider the following 137-residue polypeptide: Small ribosomal subunit protein uS12 (137 aa).

Residues 1 to 57 (MPTINQLIRKGRKSKGSKSNSPALNFGYNSYKKVQTNNSAPQKRGVATRVGTMTPKK) are disordered. A compositionally biased stretch (polar residues) spans 32-41 (KKVQTNNSAP). 3-methylthioaspartic acid is present on aspartate 102.

The protein belongs to the universal ribosomal protein uS12 family. Part of the 30S ribosomal subunit. Contacts proteins S8 and S17. May interact with IF1 in the 30S initiation complex.

With S4 and S5 plays an important role in translational accuracy. Its function is as follows. Interacts with and stabilizes bases of the 16S rRNA that are involved in tRNA selection in the A site and with the mRNA backbone. Located at the interface of the 30S and 50S subunits, it traverses the body of the 30S subunit contacting proteins on the other side and probably holding the rRNA structure together. The combined cluster of proteins S8, S12 and S17 appears to hold together the shoulder and platform of the 30S subunit. The chain is Small ribosomal subunit protein uS12 from Ligilactobacillus salivarius (strain UCC118) (Lactobacillus salivarius).